Consider the following 236-residue polypeptide: Pyridoxine 5'-phosphate synthase (236 aa).

Position 6 (N6) interacts with 3-amino-2-oxopropyl phosphate. 8–9 (DH) contributes to the 1-deoxy-D-xylulose 5-phosphate binding site. R17 contributes to the 3-amino-2-oxopropyl phosphate binding site. H42 (proton acceptor) is an active-site residue. R44 and H49 together coordinate 1-deoxy-D-xylulose 5-phosphate. The Proton acceptor role is filled by E69. T99 provides a ligand contact to 1-deoxy-D-xylulose 5-phosphate. Catalysis depends on H190, which acts as the Proton donor. Residues G191 and 212–213 (GH) each bind 3-amino-2-oxopropyl phosphate.

It belongs to the PNP synthase family. As to quaternary structure, homooctamer; tetramer of dimers.

The protein resides in the cytoplasm. It carries out the reaction 3-amino-2-oxopropyl phosphate + 1-deoxy-D-xylulose 5-phosphate = pyridoxine 5'-phosphate + phosphate + 2 H2O + H(+). It functions in the pathway cofactor biosynthesis; pyridoxine 5'-phosphate biosynthesis; pyridoxine 5'-phosphate from D-erythrose 4-phosphate: step 5/5. In terms of biological role, catalyzes the complicated ring closure reaction between the two acyclic compounds 1-deoxy-D-xylulose-5-phosphate (DXP) and 3-amino-2-oxopropyl phosphate (1-amino-acetone-3-phosphate or AAP) to form pyridoxine 5'-phosphate (PNP) and inorganic phosphate. This Chloroherpeton thalassium (strain ATCC 35110 / GB-78) protein is Pyridoxine 5'-phosphate synthase.